A 402-amino-acid chain; its full sequence is Multidrug resistance protein MdtH (402 aa).

The Cytoplasmic segment spans residues 1–12; the sequence is MSRVSQARNLGK. A helical transmembrane segment spans residues 13–33; the sequence is YFLLIDNMLVVLGFFVVFPLI. Residues 34-98 are Periplasmic-facing; that stretch reads SIRFIDQMGW…GFATMGIAHE (65 aa). The helical transmembrane segment at 99-116 threads the bilayer; the sequence is PWLLWFSCFLSGLGGTLF. The Cytoplasmic portion of the chain corresponds to 117–138; it reads DPPRSALVVKLIRPEQRGRFFS. A helical transmembrane segment spans residues 139-159; the sequence is LLMMQDSAGAVIGALLGSWLL. Residues 160-164 lie on the Periplasmic side of the membrane; sequence QYDFR. Residues 165 to 185 traverse the membrane as a helical segment; sequence LVCATGAILFILCALFNAWLL. Residues 186-213 lie on the Cytoplasmic side of the membrane; that stretch reads PAWKLSTVRTPVREGMRRVMSDKRFVTY. A helical transmembrane segment spans residues 214 to 234; it reads VLTLAGYYMLAVQVMLMLPIM. The Periplasmic segment spans residues 235 to 243; that stretch reads VNDIAGSPA. A helical membrane pass occupies residues 244 to 264; that stretch reads AVKWMYAIEACLSLTLLYPIA. Residues 265–276 lie on the Cytoplasmic side of the membrane; sequence RWSEKRFRLEHR. Residues 277–297 form a helical membrane-spanning segment; it reads LMAGLLVMSLSMIPIGMVGNL. Over 298–299 the chain is Periplasmic; that stretch reads QQ. The helical transmembrane segment at 300 to 320 threads the bilayer; the sequence is LFTLICAFYIGSVIAEPARET. At 321 to 339 the chain is on the cytoplasmic side; sequence LSASLADARARGSYMGFSR. The helical transmembrane segment at 340–360 threads the bilayer; it reads LGLAIGGAIGYIGGGWLFDMG. The Periplasmic portion of the chain corresponds to 361 to 367; the sequence is KALTQPE. A helical membrane pass occupies residues 368–388; the sequence is LPWMMLGIIGFITFLALGWQF. Topologically, residues 389-402 are cytoplasmic; sequence SHKRTPRRMLEPGA.

The protein belongs to the major facilitator superfamily. DHA1 family. MdtH (TC 2.A.1.2.21) subfamily.

The protein localises to the cell inner membrane. In Salmonella paratyphi C (strain RKS4594), this protein is Multidrug resistance protein MdtH.